A 528-amino-acid chain; its full sequence is Na(+)/H(+) antiporter NhaB (528 aa).

Helical transmembrane passes span 10 to 30 (IGNFLGNSPKWYKIAILSFLI), 63 to 83 (YPLQPGGLLAIEAVAIGMTSA), 96 to 116 (VLLLLVFMVAGIYFMKQLLLF), 131 to 165 (VSLMFCLTSAFLSAFLDALTVIAVIIAVAVGFYAI), 204 to 224 (LLMHAGVGTALGGVCTMVGEP), 240 to 260 (FVVRMSPVTVPVLIAGILTCL), 305 to 325 (VLVGVWLIAGLALHLASVGLV), 359 to 379 (LAVFFAVVAVIIDQHLFAPVI), 391 to 411 (LVIFYIANGLLSMVSDNVFVG), 449 to 469 (ATPNGQAAFLFLLTSALAPLI), and 476 to 496 (MVWMALPYTIVLSVVGVLAIE).

The protein belongs to the NhaB Na(+)/H(+) (TC 2.A.34) antiporter family.

It is found in the cell inner membrane. It catalyses the reaction 2 Na(+)(in) + 3 H(+)(out) = 2 Na(+)(out) + 3 H(+)(in). Na(+)/H(+) antiporter that extrudes sodium in exchange for external protons. The polypeptide is Na(+)/H(+) antiporter NhaB (Shewanella sp. (strain W3-18-1)).